A 126-amino-acid chain; its full sequence is Late histone H2A.3, gonadal (126 aa).

A compositionally biased stretch (basic residues) spans 1–18; it reads MSGRGKGAKAKGKAKSRS. Positions 1–21 are disordered; the sequence is MSGRGKGAKAKGKAKSRSSRA. Residue Ser-2 is modified to N-acetylserine. Ser-2 is modified (phosphoserine). Gln-104 carries the N5-methylglutamine modification. A Glycyl lysine isopeptide (Lys-Gly) (interchain with G-Cter in ubiquitin) cross-link involves residue Lys-119.

It belongs to the histone H2A family. In terms of assembly, the nucleosome is a histone octamer containing two molecules each of H2A, H2B, H3 and H4 assembled in one H3-H4 heterotetramer and two H2A-H2B heterodimers. The octamer wraps approximately 147 bp of DNA. In terms of processing, monoubiquitination of Lys-119 gives a specific tag for epigenetic transcriptional repression. Phosphorylation of Ser-2 directly represses transcription.

The protein resides in the nucleus. It is found in the chromosome. Functionally, core component of nucleosome. Nucleosomes wrap and compact DNA into chromatin, limiting DNA accessibility to the cellular machineries which require DNA as a template. Histones thereby play a central role in transcription regulation, DNA repair, DNA replication and chromosomal stability. DNA accessibility is regulated via a complex set of post-translational modifications of histones, also called histone code, and nucleosome remodeling. This is Late histone H2A.3, gonadal from Psammechinus miliaris (Green sea urchin).